We begin with the raw amino-acid sequence, 282 residues long: MAAVVGVSLKRGFSATALGRVGLQFQACREAQTAAAAAPRIKTFAIYRWDPDKAGDKPRMQTYKVDLNKCGPMVLDALIKIKNEIDSTLTFRRSCREGICGSCAMNINGGNTLACTRRIDTDLGKVSKIYPLPHMYVIKDLVPDLSNFYAQYKSIEPYLKKKDESQEGKQQYLQSIEDREKLDGLYECILCACCSTSCPSYWWNGDKYLGPAVLMQAYRWMIDSRDEFTEERLAKLQDPFSLYRCHTIMNCTQTCPKGLNPGKAIAEIKKMMATYKEKRALA.

Residues methionine 1–glutamate 30 constitute a mitochondrion transit peptide. An N6-acetyllysine mark is found at lysine 53 and lysine 57. The 2Fe-2S ferredoxin-type domain maps to aspartate 56–methionine 135. The [2Fe-2S] cluster site is built by cysteine 95, cysteine 100, cysteine 103, and cysteine 115. The tract at residues phenylalanine 148 to tryptophan 220 is interaction with SDHAF1. The 4Fe-4S ferredoxin-type domain occupies aspartate 178–tyrosine 208. [4Fe-4S] cluster-binding residues include cysteine 188, cysteine 191, and cysteine 194. Cysteine 198 is a binding site for [3Fe-4S] cluster. A ubiquinone is bound at residue tryptophan 203. Cysteine 245 and cysteine 251 together coordinate [3Fe-4S] cluster. Cysteine 255 contacts [4Fe-4S] cluster.

It belongs to the succinate dehydrogenase/fumarate reductase iron-sulfur protein family. In terms of assembly, component of complex II composed of four subunits: the flavoprotein (FP) SDHA, iron-sulfur protein (IP) SDHB, and a cytochrome b560 composed of SDHC and SDHD. Interacts with SDHAF1; the interaction is required for iron-sulfur cluster incorporation into SDHB. The cofactor is [2Fe-2S] cluster. It depends on [3Fe-4S] cluster as a cofactor. [4Fe-4S] cluster serves as cofactor.

The protein localises to the mitochondrion inner membrane. The enzyme catalyses a quinone + succinate = fumarate + a quinol. It catalyses the reaction (R)-malate + a quinone = enol-oxaloacetate + a quinol. The catalysed reaction is (S)-malate + a quinone = enol-oxaloacetate + a quinol. It functions in the pathway carbohydrate metabolism; tricarboxylic acid cycle; fumarate from succinate (eukaryal route): step 1/1. With respect to regulation, enol-oxaloacetate inhibits the succinate dehydrogenase activity. Its function is as follows. Iron-sulfur protein (IP) subunit of the succinate dehydrogenase complex (mitochondrial respiratory chain complex II), responsible for transferring electrons from succinate to ubiquinone (coenzyme Q). SDH also oxidizes malate to the non-canonical enol form of oxaloacetate, enol-oxaloacetate. Enol-oxaloacetate, which is a potent inhibitor of the succinate dehydrogenase activity, is further isomerized into keto-oxaloacetate. This chain is Succinate dehydrogenase [ubiquinone] iron-sulfur subunit, mitochondrial (Sdhb), found in Rattus norvegicus (Rat).